Consider the following 82-residue polypeptide: Nuclear protein 1 (82 aa).

Residues 1–82 (MATFPPATSA…SERKKRGARR (82 aa)) form a disordered region. The span at 17 to 28 (PEDEDSSLDESD) shows a compositional bias: acidic residues. The Nuclear localization signal signature appears at 65–82 (KLVTKLQNSERKKRGARR).

This sequence belongs to the NUPR family. As to quaternary structure, monomer. Directly interacts with MSL1 and binds MORF4L1, two components of histone acetyltransferase complex; the interaction with MORF4L1 may be mediated by MSL1. Interacts with EP300; this interaction enhances the effect of EP300 on PAX2 transcription factor activity. Interacts with PAXIP1; this interaction prevents PAXIP1 inhibition of PAX2 transcription factor activity. Interacts with COPS5; this interaction allows COPS5-dependent CDKN1B nuclear to cytoplasm translocation. Interacts with RNF2. Interacts with FOXO3; this interaction represses FOXO3 transactivation. Interacts with PTMA; negatively regulates apoptotic process. Interacts with MYOD1, EP300 and DDX5; this interaction coordinates the association of anti-proliferative and pro-myogenic proteins at the myogenin promoter. Interacts with TP53; interaction is stress-dependent. Forms a complex with EP300 and TP53; this complex binds CDKN1A promoter leading to transcriptional induction of CDKN1A. In terms of processing, phosphorylated in vitro by PKA and CK. Phosphorylation promotes DNA-binding activity. Post-translationally, acetylated by EP300 in vitro. Widely expressed, with high levels in liver, pancreas, prostate, ovary, colon, thyroid, spinal cord, trachea and adrenal gland, moderate levels in heart, placenta, lung, skeletal muscle, kidney, testis, small intestine, stomach and lymph node, and low levels in brain, spleen, thymus and bone marrow. Not detected in peripheral blood leukocytes.

The protein localises to the nucleus. The protein resides in the cytoplasm. Its subcellular location is the perinuclear region. Transcription regulator that converts stress signals into a program of gene expression that empowers cells with resistance to the stress induced by a change in their microenvironment. Thereby participates in the regulation of many processes namely cell-cycle, apoptosis, autophagy and DNA repair responses. Controls cell cycle progression and protects cells from genotoxic stress induced by doxorubicin through the complex formation with TP53 and EP300 that binds CDKN1A promoter leading to transcriptional induction of CDKN1A. Protects pancreatic cancer cells from stress-induced cell death by binding the RELB promoter and activating its transcription, leading to IER3 transactivation. Negatively regulates apoptosis through interaction with PTMA. Inhibits autophagy-induced apoptosis in cardiac cells through FOXO3 interaction, inducing cytoplasmic translocation of FOXO3 thereby preventing the FOXO3 association with the pro-autophagic BNIP3 promoter. Inhibits cell growth and facilitates programmed cell death by apoptosis after adriamycin-induced DNA damage through transactivation of TP53. Regulates methamphetamine-induced apoptosis and autophagy through DDIT3-mediated endoplasmic reticulum stress pathway. Participates in DNA repair following gamma-irradiation by facilitating DNA access of the transcription machinery through interaction with MSL1 leading to inhibition of histone H4' Lys-16' acetylation (H4K16ac). Coactivator of PAX2 transcription factor activity, both by recruiting EP300 to increase PAX2 transcription factor activity and by binding PAXIP1 to suppress PAXIP1-induced inhibition on PAX2. Positively regulates cell cycle progression through interaction with COPS5 inducing cytoplasmic translocation of CDKN1B leading to the CDKN1B degradation. Coordinates, through its interaction with EP300, the assiociation of MYOD1, EP300 and DDX5 to the MYOG promoter, leading to inhibition of cell-cycle progression and myogenic differentiation promotion. Negatively regulates beta cell proliferation via inhibition of cell-cycle regulatory genes expression through the suppression of their promoter activities. Also required for LHB expression and ovarian maturation. Exacerbates CNS inflammation and demyelination upon cuprizone treatment. The protein is Nuclear protein 1 of Homo sapiens (Human).